Here is a 184-residue protein sequence, read N- to C-terminus: Casparian strip membrane protein 3 (184 aa).

The Cytoplasmic portion of the chain corresponds to 1-24 (MEGSEEHGETSKAPLSRGVSKGVS). A helical membrane pass occupies residues 25-45 (ILDVILRFVAIIGTLASAIAM). Residues 46–72 (GTTNQTLPFFTQFIRFKAQYSDLPTLT) are Extracellular-facing. N-linked (GlcNAc...) asparagine glycosylation is present at N49. A helical membrane pass occupies residues 73–93 (FFVVANSIVSAYLILSLPLSI). Over 94-105 (VHVIRSRAKYSR) the chain is Cytoplasmic. The chain crosses the membrane as a helical span at residues 106 to 126 (LILIFFDAAMLALVTAGASAA). The Extracellular segment spans residues 127–159 (AAIVYLAHKGNARANWLAICQQFDSFCERISGS). The chain crosses the membrane as a helical span at residues 160–180 (LIGSFAAMVVLVLLIFLSAIA). The Cytoplasmic segment spans residues 181–184 (LARR).

The protein belongs to the Casparian strip membrane proteins (CASP) family. As to quaternary structure, homodimer and heterodimers.

Its subcellular location is the cell membrane. Functionally, regulates membrane-cell wall junctions and localized cell wall deposition. Required for establishment of the Casparian strip membrane domain (CSD) and the subsequent formation of Casparian strips, a cell wall modification of the root endodermis that determines an apoplastic barrier between the intraorganismal apoplasm and the extraorganismal apoplasm and prevents lateral diffusion. This is Casparian strip membrane protein 3 from Oryza sativa subsp. indica (Rice).